The primary structure comprises 485 residues: Glutathione gamma-glutamylcysteinyltransferase 1 (485 aa).

The Peptidase C83 domain occupies 1–221 (MAMASLYRRS…GFMLISRPHR (221 aa)). Catalysis depends on residues C56, H162, and D180.

Belongs to the phytochelatin synthase family. As to expression, expressed in roots and shoots.

The catalysed reaction is [Glu(-Cys)](n)-Gly + glutathione + H(+) = [Glu(-Cys)](n+1)-Gly + glycine. Requires cadmium for activity. Also activated in vitro or in heterologous system by Ag(+), Hg(+), Zn(2+), Cu(2+), Fe(2+) or Fe(3+) ions, but not by Co(2+) or Ni(2+) ions. Involved in the synthesis of phytochelatins (PC) and homophytochelatins (hPC), the heavy-metal-binding peptides of plants. Also involved in glutathione-conjugates degradation. The sequence is that of Glutathione gamma-glutamylcysteinyltransferase 1 (PCS1) from Arabidopsis thaliana (Mouse-ear cress).